The following is a 440-amino-acid chain: 3-phosphoshikimate 1-carboxyvinyltransferase (440 aa).

3 residues coordinate 3-phosphoshikimate: lysine 26, serine 27, and arginine 31. Lysine 26 contacts phosphoenolpyruvate. Phosphoenolpyruvate contacts are provided by glycine 99 and arginine 127. 3-phosphoshikimate contacts are provided by serine 172, glutamine 174, aspartate 320, and lysine 347. Phosphoenolpyruvate is bound at residue glutamine 174. The active-site Proton acceptor is aspartate 320. The phosphoenolpyruvate site is built by arginine 351 and arginine 392.

The protein belongs to the EPSP synthase family. Monomer.

The protein localises to the cytoplasm. The catalysed reaction is 3-phosphoshikimate + phosphoenolpyruvate = 5-O-(1-carboxyvinyl)-3-phosphoshikimate + phosphate. It participates in metabolic intermediate biosynthesis; chorismate biosynthesis; chorismate from D-erythrose 4-phosphate and phosphoenolpyruvate: step 6/7. Functionally, catalyzes the transfer of the enolpyruvyl moiety of phosphoenolpyruvate (PEP) to the 5-hydroxyl of shikimate-3-phosphate (S3P) to produce enolpyruvyl shikimate-3-phosphate and inorganic phosphate. This chain is 3-phosphoshikimate 1-carboxyvinyltransferase, found in Xanthomonas oryzae pv. oryzae (strain MAFF 311018).